The sequence spans 232 residues: Orotidine 5'-phosphate decarboxylase (232 aa).

Substrate-binding positions include D10, K32, 59–68, T119, R180, Q189, G209, and R210; that span reads DLKFHDIPNT. K61 functions as the Proton donor in the catalytic mechanism.

The protein belongs to the OMP decarboxylase family. Type 1 subfamily. In terms of assembly, homodimer.

It catalyses the reaction orotidine 5'-phosphate + H(+) = UMP + CO2. It participates in pyrimidine metabolism; UMP biosynthesis via de novo pathway; UMP from orotate: step 2/2. In terms of biological role, catalyzes the decarboxylation of orotidine 5'-monophosphate (OMP) to uridine 5'-monophosphate (UMP). This Actinobacillus succinogenes (strain ATCC 55618 / DSM 22257 / CCUG 43843 / 130Z) protein is Orotidine 5'-phosphate decarboxylase.